The following is a 900-amino-acid chain: Suppressor of activated egl-4 protein 1 (900 aa).

3 disordered regions span residues 1–75 (MPPP…HLPT), 340–380 (PVAE…SRKN), and 406–425 (WAST…ESLE). A compositionally biased stretch (polar residues) spans 53–75 (ASGQQHRPSIMSGQSHQNNHLPT). 2 stretches are compositionally biased toward basic and acidic residues: residues 358 to 377 (GDMK…DGPS) and 412 to 425 (ADEK…ESLE). The ELM2 domain maps to 451 to 544 (PHINLGKNYQ…AAVEDLLRSD (94 aa)). An SANT domain is found at 560–611 (NDSVLWTPDEIYQFQDAIYQSEKDFDKVAVELPGKSVKECVQFYYTWKKDCP). The segment at 710–729 (PTAPRAHHTPSASASKKGAQ) is disordered. The C2H2-type zinc finger occupies 736-758 (FHCRLCDKCFEKVKSLNAHMKSH).

As to quaternary structure, may be a component of a histone deacetylase complex containing saeg-2, saeg-1 and hda-2. May interact with egl-4. Ubiquitously expressed.

The protein localises to the nucleus. In terms of biological role, as a likely component of a histone deacetylase complex, together with saeg-2 and hda-2, functions downstream of the cAMP-dependent kinase egl-4 to regulate the expression of genes required for egg-laying and foraging. This is Suppressor of activated egl-4 protein 1 from Caenorhabditis elegans.